We begin with the raw amino-acid sequence, 250 residues long: MSRRYDSRTTIFSPEGRLYQVEYAMEAIGNAGSAIGILAKDGVVLIGEKKVTSKLLQTSTSTEKMYKIDDHVACAVAGIMSDANILINTARVQAQRYTFSYQEPMPVEQLVQSLCDTKQGYTQFGGLRPFGVSFLFAGWDKNYGFQLYMSDPSGNYGGWKATAIGANNQAAQSMLKQDYKDDVTREDAVKLALKALSKTMDSTSLTSEKLELAEVYLLPSGKVKYQVHSPESLNRLLTESGLTQPAAETS.

This sequence belongs to the peptidase T1A family. The 26S proteasome consists of a 20S proteasome core and two 19S regulatory subunits. The 20S proteasome core is composed of 28 subunits that are arranged in four stacked rings, resulting in a barrel-shaped structure. The two end rings are each formed by seven alpha subunits, and the two central rings are each formed by seven beta subunits. The catalytic chamber with the active sites is on the inside of the barrel.

The protein resides in the cytoplasm. Its subcellular location is the nucleus. The proteasome is a multicatalytic proteinase complex which is characterized by its ability to cleave peptides with Arg, Phe, Tyr, Leu, and Glu adjacent to the leaving group at neutral or slightly basic pH. The proteasome has an ATP-dependent proteolytic activity. This is Proteasome subunit alpha type-4 (PAC1) from Spinacia oleracea (Spinach).